The following is a 445-amino-acid chain: Probable D-serine dehydratase (445 aa).

Residue K111 is modified to N6-(pyridoxal phosphate)lysine.

This sequence belongs to the serine/threonine dehydratase family. DsdA subfamily. Pyridoxal 5'-phosphate is required as a cofactor.

It carries out the reaction D-serine = pyruvate + NH4(+). This chain is Probable D-serine dehydratase, found in Burkholderia pseudomallei (strain K96243).